A 152-amino-acid chain; its full sequence is Deoxyuridine 5'-triphosphate nucleotidohydrolase (152 aa).

Substrate contacts are provided by residues 71–73, N84, and 88–90; these read RSG and LID.

Belongs to the dUTPase family. It depends on Mg(2+) as a cofactor.

It catalyses the reaction dUTP + H2O = dUMP + diphosphate + H(+). The protein operates within pyrimidine metabolism; dUMP biosynthesis; dUMP from dCTP (dUTP route): step 2/2. In terms of biological role, this enzyme is involved in nucleotide metabolism: it produces dUMP, the immediate precursor of thymidine nucleotides and it decreases the intracellular concentration of dUTP so that uracil cannot be incorporated into DNA. This Xanthomonas campestris pv. campestris (strain 8004) protein is Deoxyuridine 5'-triphosphate nucleotidohydrolase.